We begin with the raw amino-acid sequence, 351 residues long: Dihydroorotate dehydrogenase (quinone) (351 aa).

FMN is bound by residues 61–65 (AGLDK) and Thr-85. Substrate is bound at residue Lys-65. A substrate-binding site is contributed by 110–114 (NRMGF). FMN is bound by residues Asn-139 and Asn-172. Residue Asn-172 coordinates substrate. The active-site Nucleophile is the Ser-175. Substrate is bound at residue Asn-177. FMN contacts are provided by Lys-217 and Thr-245. 246–247 (NT) is a binding site for substrate. FMN contacts are provided by residues Gly-268, Gly-297, and 318–319 (YS).

Belongs to the dihydroorotate dehydrogenase family. Type 2 subfamily. As to quaternary structure, monomer. FMN serves as cofactor.

Its subcellular location is the cell membrane. It carries out the reaction (S)-dihydroorotate + a quinone = orotate + a quinol. Its pathway is pyrimidine metabolism; UMP biosynthesis via de novo pathway; orotate from (S)-dihydroorotate (quinone route): step 1/1. Catalyzes the conversion of dihydroorotate to orotate with quinone as electron acceptor. This Xanthomonas oryzae pv. oryzae (strain PXO99A) protein is Dihydroorotate dehydrogenase (quinone).